We begin with the raw amino-acid sequence, 226 residues long: MVLSDFDRTLSDEKDNFIIKQEVVEVVNKFSAKFLFFVVTGRERKYMDILAKGLFPTGWIIENGGIIILRDKEIKLVDEKWYKIRKNLAKILDKNGIKYSLGEVIIYVNSAIDYKDKLDKINEAKIEWNRSDAMIMPKNVSKGEAVKILKSILNFEGVTIAIGDSQNDISLFSVADIKVAVANALPEIKAISDIVLDKEDGIGVMRFLEKILNDGSYLEKLIGFRK.

Aspartate 5 (nucleophile) is an active-site residue. Residues aspartate 5 and aspartate 7 each contribute to the Mg(2+) site. Lysine 142 contributes to the substrate binding site. Mg(2+)-binding residues include aspartate 164 and aspartate 168.

It belongs to the archaeal SPP-like hydrolase family. The cofactor is Mg(2+).

It catalyses the reaction 2-phosphoglycolate + H2O = glycolate + phosphate. In terms of biological role, catalyzes the dephosphorylation of 2-phosphoglycolate. This chain is Phosphoglycolate phosphatase, found in Sulfurisphaera tokodaii (strain DSM 16993 / JCM 10545 / NBRC 100140 / 7) (Sulfolobus tokodaii).